Here is a 121-residue protein sequence, read N- to C-terminus: Probable V-type proton ATPase subunit F (121 aa).

The protein belongs to the V-ATPase F subunit family. V-ATPase is a heteromultimeric enzyme made up of two complexes: the ATP-hydrolytic V1 complex and the proton translocation V0 complex. The V1 complex consists of three catalytic AB heterodimers that form a heterohexamer, three peripheral stalks each consisting of EG heterodimers, one central rotor including subunits D and F, and the regulatory subunits C and H. The proton translocation complex V0 consists of the proton transport subunit a, a ring of proteolipid subunits c9c'', rotary subunit d, subunits e and f, and the accessory subunits vah-19/Ac45 and vah-20/PRR.

Its function is as follows. Subunit of the V1 complex of vacuolar(H+)-ATPase (V-ATPase), a multisubunit enzyme composed of a peripheral complex (V1) that hydrolyzes ATP and a membrane integral complex (V0) that translocates protons. V-ATPase is responsible for acidifying and maintaining the pH of intracellular compartments and in some cell types, is targeted to the plasma membrane, where it is responsible for acidifying the extracellular environment. Required along with other vacuolar ATPase components for the removal of protein aggregates which form in immature oocytes in the distal gonad. This removal occurs as the oocytes mature and move to the proximal gonad, is triggered by the introduction of sperm through mating and occurs before fertilization. The introduction of sperm triggers V-ATPase accumulation in proximal oocytes and induces lysosomal acidification which leads to engulfing of protein aggregates by lysosomes and subsequent clearance of the aggregates. Lysosomal acidification also leads to changes in mitochondrial morphology and function. Mitochondria in distal immature oocytes are fragmented, produce high levels of reactive oxygen species (ROS) and have high membrane potential, indicative of metabolic inactivity. In contrast, mitochondria in proximal mature oocytes are tubular with lower ROS levels and membrane potential, indicative of an active metabolic state required for aggregate mobilization before clearance. This chain is Probable V-type proton ATPase subunit F, found in Caenorhabditis elegans.